The chain runs to 181 residues: Translation initiation factor IF-3 (181 aa).

This sequence belongs to the IF-3 family. In terms of assembly, monomer.

Its subcellular location is the cytoplasm. Functionally, IF-3 binds to the 30S ribosomal subunit and shifts the equilibrium between 70S ribosomes and their 50S and 30S subunits in favor of the free subunits, thus enhancing the availability of 30S subunits on which protein synthesis initiation begins. This is Translation initiation factor IF-3 from Cereibacter sphaeroides (strain ATCC 17023 / DSM 158 / JCM 6121 / CCUG 31486 / LMG 2827 / NBRC 12203 / NCIMB 8253 / ATH 2.4.1.) (Rhodobacter sphaeroides).